The following is a 370-amino-acid chain: Glutamine synthetase (370 aa).

Positions 23-102 (VLAEYVWIDA…VLTECWNNDG (80 aa)) constitute a GS beta-grasp domain. The interval 40 to 69 (CKTLDKKPSSVEDLPEWNFDGSSTGQAPGH) is disordered. The GS catalytic domain maps to 109 to 370 (HRHESAKLMK…FKEYARESSD (262 aa)).

The protein belongs to the glutamine synthetase family. Homooctamer.

It localises to the cytoplasm. The enzyme catalyses L-glutamate + NH4(+) + ATP = L-glutamine + ADP + phosphate + H(+). The sequence is that of Glutamine synthetase (GLN1) from Debaryomyces hansenii (strain ATCC 36239 / CBS 767 / BCRC 21394 / JCM 1990 / NBRC 0083 / IGC 2968) (Yeast).